We begin with the raw amino-acid sequence, 466 residues long: Phytase A (466 aa).

Positions 1–19 (MAVLSVLLPITFLLSSVTG) are cleaved as a signal peptide. Cysteine 30 and cysteine 39 form a disulfide bridge. 6 residues coordinate 1D-myo-inositol hexakisphosphate: glutamine 49, tyrosine 50, arginine 80, histidine 81, arginine 84, and threonine 87. 4 disulfides stabilise this stretch: cysteine 70-cysteine 413, cysteine 214-cysteine 464, cysteine 263-cysteine 281, and cysteine 435-cysteine 443. Histidine 81 serves as the catalytic Nucleophile. Asparagine 104 and asparagine 119 each carry an N-linked (GlcNAc...) asparagine glycan. A 1D-myo-inositol hexakisphosphate-binding site is contributed by arginine 164. N-linked (GlcNAc...) asparagine glycosylation is found at asparagine 206 and asparagine 219. Lysine 300 is a 1D-myo-inositol hexakisphosphate binding site. N-linked (GlcNAc...) asparagine glycans are attached at residues asparagine 338 and asparagine 351. The 1D-myo-inositol hexakisphosphate site is built by histidine 360 and aspartate 361. The N-linked (GlcNAc...) asparagine glycan is linked to asparagine 375.

It belongs to the histidine acid phosphatase family. In terms of assembly, monomer.

The protein resides in the secreted. The enzyme catalyses 1D-myo-inositol hexakisphosphate + H2O = 1D-myo-inositol 1,2,4,5,6-pentakisphosphate + phosphate. It carries out the reaction 1D-myo-inositol 1,2,4,5,6-pentakisphosphate + H2O = 1D-myo-inositol 1,2,5,6-tetrakisphosphate + phosphate. It catalyses the reaction 1D-myo-inositol 1,2,5,6-tetrakisphosphate + H2O = 1D-myo-inositol 1,2,6-trisphosphate + phosphate. The catalysed reaction is 1D-myo-inositol 1,2,6-trisphosphate + H2O = 1D-myo-inositol 1,2-bisphosphate + phosphate. The enzyme catalyses 1D-myo-inositol 1,2-bisphosphate + H2O = 1D-myo-inositol 2-phosphate + phosphate. Catalyzes the phosphate monoester hydrolysis of phytic acid (myo-inositol hexakisphosphate), which results in the stepwise formation of myo-inositol pentakis-, tetrakis-, tris-, bis-, and monophosphates, as well as the liberation of inorganic phosphate. Myo-inositol 2-monophosphate is the end product. This Aspergillus oryzae (strain ATCC 42149 / RIB 40) (Yellow koji mold) protein is Phytase A (phyA).